The following is a 788-amino-acid chain: 5-methyltetrahydropteroyltriglutamate--homocysteine methyltransferase (788 aa).

Residues 24-27 (RELK) and K140 each bind 5-methyltetrahydropteroyltri-L-glutamate. Residues 463–465 (IGS) and E516 each bind L-homocysteine. Residues 463–465 (IGS) and E516 contribute to the L-methionine site. Residues 547 to 548 (RC) and W593 contribute to the 5-methyltetrahydropteroyltri-L-glutamate site. D631 is a binding site for L-homocysteine. An L-methionine-binding site is contributed by D631. 5-methyltetrahydropteroyltri-L-glutamate is bound at residue E637. Zn(2+)-binding residues include H673, C675, and E697. The active-site Proton donor is the H726. Residue C758 coordinates Zn(2+).

This sequence belongs to the vitamin-B12 independent methionine synthase family. It depends on Zn(2+) as a cofactor.

The catalysed reaction is 5-methyltetrahydropteroyltri-L-glutamate + L-homocysteine = tetrahydropteroyltri-L-glutamate + L-methionine. Its pathway is amino-acid biosynthesis; L-methionine biosynthesis via de novo pathway; L-methionine from L-homocysteine (MetE route): step 1/1. Functionally, catalyzes the transfer of a methyl group from 5-methyltetrahydrofolate to homocysteine resulting in methionine formation. This chain is 5-methyltetrahydropteroyltriglutamate--homocysteine methyltransferase, found in Rhodopseudomonas palustris (strain ATCC BAA-98 / CGA009).